Here is a 188-residue protein sequence, read N- to C-terminus: MKITALEGQKISELSMIEVAHALLEQNGKEMQFSEIIRAIQDYLEKSDDEIKASISRFYTEINTDGSFIPLGNNVWALRSWYAIDEIDEEVIALDEIEDEEEEEKPAKKRKKVNAFGIEDEIDPEDEEGTKETTEEDMSYDTQAEDEDKDDVAAYDAELAEVELDNVDEEVDIEVEDDEDDSDDTDED.

One can recognise an HTH HARE-type domain in the interval 14 to 81 (LSMIEVAHAL…GNNVWALRSW (68 aa)). A disordered region spans residues 96–188 (EIEDEEEEEK…EDDSDDTDED (93 aa)). Acidic residues-rich tracts occupy residues 118-150 (IEDE…EDKD) and 158-188 (ELAE…TDED).

It belongs to the RpoE family. As to quaternary structure, RNAP is composed of a core of 2 alpha, a beta and a beta' subunits. The core is associated with a delta subunit and one of several sigma factors.

Functionally, participates in both the initiation and recycling phases of transcription. In the presence of the delta subunit, RNAP displays an increased specificity of transcription, a decreased affinity for nucleic acids, and an increased efficiency of RNA synthesis because of enhanced recycling. The chain is Probable DNA-directed RNA polymerase subunit delta from Lactococcus lactis subsp. cremoris (strain MG1363).